The primary structure comprises 244 residues: 1-(5-phosphoribosyl)-5-[(5-phosphoribosylamino)methylideneamino] imidazole-4-carboxamide isomerase (244 aa).

Aspartate 11 serves as the catalytic Proton acceptor. Aspartate 132 functions as the Proton donor in the catalytic mechanism.

This sequence belongs to the HisA/HisF family.

The protein resides in the cytoplasm. The catalysed reaction is 1-(5-phospho-beta-D-ribosyl)-5-[(5-phospho-beta-D-ribosylamino)methylideneamino]imidazole-4-carboxamide = 5-[(5-phospho-1-deoxy-D-ribulos-1-ylimino)methylamino]-1-(5-phospho-beta-D-ribosyl)imidazole-4-carboxamide. Its pathway is amino-acid biosynthesis; L-histidine biosynthesis; L-histidine from 5-phospho-alpha-D-ribose 1-diphosphate: step 4/9. This is 1-(5-phosphoribosyl)-5-[(5-phosphoribosylamino)methylideneamino] imidazole-4-carboxamide isomerase from Sphingopyxis alaskensis (strain DSM 13593 / LMG 18877 / RB2256) (Sphingomonas alaskensis).